The primary structure comprises 358 residues: GTPase Obg (358 aa).

In terms of domain architecture, Obg spans 1–159 (MKFVDEVTIR…RNLHLELRLL (159 aa)). The OBG-type G domain occupies 160–334 (ADVGLLGMPN…LAQDVMNRLE (175 aa)). Residues 166–173 (GMPNAGKS), 191–195 (FTTLY), 213–216 (DIPG), 284–287 (NKLD), and 315–317 (SAL) contribute to the GTP site. Mg(2+) contacts are provided by Ser173 and Thr193. Positions 337–358 (DEEAREAGERARREQRQEEGPE) are disordered. Residues 341–358 (REAGERARREQRQEEGPE) show a composition bias toward basic and acidic residues.

This sequence belongs to the TRAFAC class OBG-HflX-like GTPase superfamily. OBG GTPase family. As to quaternary structure, monomer. The cofactor is Mg(2+).

It is found in the cytoplasm. Its function is as follows. An essential GTPase which binds GTP, GDP and possibly (p)ppGpp with moderate affinity, with high nucleotide exchange rates and a fairly low GTP hydrolysis rate. Plays a role in control of the cell cycle, stress response, ribosome biogenesis and in those bacteria that undergo differentiation, in morphogenesis control. The sequence is that of GTPase Obg from Alkalilimnicola ehrlichii (strain ATCC BAA-1101 / DSM 17681 / MLHE-1).